The chain runs to 516 residues: Nondiscriminating glutamyl-tRNA synthetase EARS2, mitochondrial (516 aa).

The transit peptide at 1 to 39 directs the protein to the mitochondrion; it reads MRPAFIRGKWLSRTLELATGLGRRTCSSRESGREVRVRF. 38–40 provides a ligand contact to L-glutamate; sequence RFA. Residues 43–51 carry the 'HIGH' region motif; it reads PTGFLHLGG. Position 48 (H48) interacts with ATP. L-glutamate-binding positions include E74, 226-230, and R244; that span reads YHLAN. ATP-binding positions include E247 and 282 to 286; that span reads KLSKR. Positions 282 to 286 match the 'KMSKS' region motif; sequence KLSKR.

Belongs to the class-I aminoacyl-tRNA synthetase family. Glutamate--tRNA ligase type 1 subfamily.

The protein resides in the mitochondrion matrix. The enzyme catalyses tRNA(Glx) + L-glutamate + ATP = L-glutamyl-tRNA(Glx) + AMP + diphosphate. It carries out the reaction tRNA(Glu) + L-glutamate + ATP = L-glutamyl-tRNA(Glu) + AMP + diphosphate. It catalyses the reaction tRNA(Gln) + L-glutamate + ATP = L-glutamyl-tRNA(Gln) + AMP + diphosphate. In terms of biological role, non-discriminating glutamyl-tRNA synthetase that catalyzes aminoacylation of both mitochondrial tRNA(Glu) and tRNA(Gln) and participates in RNA aminoacylation for mitochondrial protein translation. Attachs glutamate to tRNA(Glu) or tRNA(Gln) in a two-step reaction: glutamate is first activated by ATP to form Glu-AMP and then transferred to the acceptor end of tRNA(Glu) or tRNA(Gln). The chain is Nondiscriminating glutamyl-tRNA synthetase EARS2, mitochondrial from Xenopus tropicalis (Western clawed frog).